A 225-amino-acid chain; its full sequence is Ribonuclease T (225 aa).

Residues 1–21 (MSEDHFDDEHEGHGGGGGSRH) are disordered. One can recognise an Exonuclease domain in the interval 33-207 (VVVDVETGGF…YDTEKTAELF (175 aa)). Mg(2+)-binding residues include aspartate 36, glutamate 38, histidine 194, and aspartate 199. The Proton donor/acceptor role is filled by histidine 194.

Belongs to the RNase T family. Homodimer. The cofactor is Mg(2+).

In terms of biological role, trims short 3' overhangs of a variety of RNA species, leaving a one or two nucleotide 3' overhang. Responsible for the end-turnover of tRNA: specifically removes the terminal AMP residue from uncharged tRNA (tRNA-C-C-A). Also appears to be involved in tRNA biosynthesis. This Pseudomonas syringae pv. syringae (strain B728a) protein is Ribonuclease T.